The sequence spans 63 residues: Ct-IT2 (63 aa).

The LCN-type CS-alpha/beta domain occupies 1–63; that stretch reads KDGYPMDSKG…VWDKATNKCG (63 aa). 4 cysteine pairs are disulfide-bonded: Cys11-Cys62, Cys15-Cys36, Cys22-Cys43, and Cys26-Cys45. Gly63 bears the Glycine amide mark.

Expressed by the venom gland.

The protein localises to the secreted. Beta toxins bind voltage-independently at site-4 of sodium channels (Nav) and shift the voltage of activation toward more negative potentials thereby affecting sodium channel activation and promoting spontaneous and repetitive firing. Is highly active on insects, since it provokes paralysis and death when injected into crickets. This chain is Ct-IT2, found in Centruroides tecomanus (Scorpion).